A 2224-amino-acid polypeptide reads, in one-letter code: Protein sidekick (2224 aa).

Residues 1–47 (MLKSAASSLRRRRPKTTITATLAIEMPSQPKLASLLAVLVLLCYCDS) form the signal peptide. The Extracellular portion of the chain corresponds to 48 to 2001 (CFFCYADANL…LQHKPFYRQT (1954 aa)). An Ig-like C2-type 1 domain is found at 72-155 (PRFTTHPSSS…SIFSEKSDVV (84 aa)). Cysteines 95 and 138 form a disulfide. Asparagine 164, asparagine 250, asparagine 318, and asparagine 327 each carry an N-linked (GlcNAc...) asparagine glycan. 4 consecutive Ig-like C2-type domains span residues 261 to 355 (PEII…ARLQ), 359 to 445 (PPLF…NSAS), 455 to 541 (PIME…AYLS), and 546 to 636 (TQII…ARLS). Cystine bridges form between cysteine 283–cysteine 336 and cysteine 382–cysteine 433. 3 N-linked (GlcNAc...) asparagine glycosylation sites follow: asparagine 463, asparagine 485, and asparagine 491. 2 disulfides stabilise this stretch: cysteine 476/cysteine 525 and cysteine 567/cysteine 620. 16 N-linked (GlcNAc...) asparagine glycosylation sites follow: asparagine 628, asparagine 661, asparagine 707, asparagine 809, asparagine 870, asparagine 942, asparagine 1019, asparagine 1094, asparagine 1109, asparagine 1172, asparagine 1203, asparagine 1282, asparagine 1329, asparagine 1379, asparagine 1414, and asparagine 1420. 13 Fibronectin type-III domains span residues 643–753 (PPSN…LPQE), 758–855 (PPVG…TKEG), 860–967 (PPTN…TMDD), 971–1065 (EVTG…VEPV), 1069–1164 (APTA…TIQA), 1169–1270 (PPFN…TREA), 1275–1372 (GPLD…TFED), 1376–1469 (VPSN…TNNR), 1474–1570 (APSV…TLPA), 1575–1677 (GVGG…VGEA), 1682–1785 (EPRA…TLPG), 1789–1883 (APLH…GPQD), and 1885–1984 (SPVA…TPSK). 2 N-linked (GlcNAc...) asparagine glycosylation sites follow: asparagine 1843 and asparagine 1876. A helical transmembrane segment spans residues 2002–2022 (WFMVSLAATSIVIIVMVIAVL). Over 2023–2224 (CVKSKSYKYK…APLPGFSSFV (202 aa)) the chain is Cytoplasmic. 2 disordered regions span residues 2068 to 2157 (TLNS…RSDP) and 2171 to 2195 (LRQS…PEGS). Serine 2071 bears the Phosphoserine mark. A compositionally biased stretch (low complexity) spans 2073-2085 (GTLRSGTLGTLGR). Threonine 2074 bears the Phosphothreonine mark. 2 stretches are compositionally biased toward basic and acidic residues: residues 2112–2122 (HSDEESLKCYD) and 2144–2157 (QHSE…RSDP). Phosphoserine is present on residues serine 2113 and serine 2117.

The protein belongs to the sidekick family.

The protein localises to the membrane. In terms of biological role, participates in homotypic or heterotypic interactions in the eye during pattern formation to prevent extra cells from joining the precluster and differentiating as photoreceptor cells. This chain is Protein sidekick, found in Drosophila melanogaster (Fruit fly).